A 453-amino-acid chain; its full sequence is tRNA (guanine-N(7)-)-methyltransferase non-catalytic subunit TRM82 (453 aa).

The interval 69 to 99 (ENEEKGIKKSKTNEGNTIEKKHDAKIPVPGP) is disordered. WD repeat units follow at residues 103–143 (PIYS…NDNC) and 244–286 (GHKE…DEFD).

The protein belongs to the WD repeat TRM82 family. As to quaternary structure, forms a heterodimer with the catalytic subunit TRM8.

The protein localises to the nucleus. Its pathway is tRNA modification; N(7)-methylguanine-tRNA biosynthesis. Functionally, required for the formation of N(7)-methylguanine at position 46 (m7G46) in tRNA. In the complex, it is required to stabilize and induce conformational changes of the catalytic subunit. The chain is tRNA (guanine-N(7)-)-methyltransferase non-catalytic subunit TRM82 from Vanderwaltozyma polyspora (strain ATCC 22028 / DSM 70294 / BCRC 21397 / CBS 2163 / NBRC 10782 / NRRL Y-8283 / UCD 57-17) (Kluyveromyces polysporus).